Consider the following 245-residue polypeptide: 1-(5-phosphoribosyl)-5-[(5-phosphoribosylamino)methylideneamino] imidazole-4-carboxamide isomerase (245 aa).

Asp7 serves as the catalytic Proton acceptor. The active-site Proton donor is the Asp129.

The protein belongs to the HisA/HisF family.

It is found in the cytoplasm. The enzyme catalyses 1-(5-phospho-beta-D-ribosyl)-5-[(5-phospho-beta-D-ribosylamino)methylideneamino]imidazole-4-carboxamide = 5-[(5-phospho-1-deoxy-D-ribulos-1-ylimino)methylamino]-1-(5-phospho-beta-D-ribosyl)imidazole-4-carboxamide. Its pathway is amino-acid biosynthesis; L-histidine biosynthesis; L-histidine from 5-phospho-alpha-D-ribose 1-diphosphate: step 4/9. This chain is 1-(5-phosphoribosyl)-5-[(5-phosphoribosylamino)methylideneamino] imidazole-4-carboxamide isomerase, found in Shewanella amazonensis (strain ATCC BAA-1098 / SB2B).